A 376-amino-acid chain; its full sequence is 5-hydroxytryptamine receptor 1D (376 aa).

The segment at 1-22 (MSPPNQSEEGLPQEASNRSLNA) is disordered. N-linked (GlcNAc...) asparagine glycosylation is found at asparagine 5, asparagine 17, and asparagine 21. Helical transmembrane passes span 39 to 64 (VSLV…TTIL), 76 to 97 (LIGS…ISIA), and 110 to 134 (LCDI…VIAL). Cysteine 111 and cysteine 188 are oxidised to a cystine. The serotonin site is built by aspartate 118 and cysteine 122. The DRY motif; important for ligand-induced conformation changes signature appears at 135 to 137 (DRY). Transmembrane regions (helical) follow at residues 155 to 176 (AGAM…PLFW), 195 to 218 (ISYT…ILYS), 300 to 325 (KTLG…VLPI), and 335 to 358 (ALFD…YTVF). Serine 320 contacts serotonin. The NPxxY motif; important for ligand-induced conformation changes and signaling signature appears at 351–355 (NPIIY).

The protein belongs to the G-protein coupled receptor 1 family. In terms of assembly, homodimer. Heterodimer with HTR1B.

The protein resides in the cell membrane. In terms of biological role, G-protein coupled receptor for 5-hydroxytryptamine (serotonin). Also functions as a receptor for ergot alkaloid derivatives, various anxiolytic and antidepressant drugs and other psychoactive substances. Ligand binding causes a conformation change that triggers signaling via guanine nucleotide-binding proteins (G proteins) and modulates the activity of downstream effectors, such as adenylate cyclase. HTR1D is coupled to G(i)/G(o) G alpha proteins and mediates inhibitory neurotransmission by inhibiting adenylate cyclase activity. Regulates the release of 5-hydroxytryptamine in the brain, and thereby affects neural activity. May also play a role in regulating the release of other neurotransmitters. May play a role in vasoconstriction. This chain is 5-hydroxytryptamine receptor 1D (HTR1D), found in Cavia porcellus (Guinea pig).